The chain runs to 300 residues: 4-hydroxy-tetrahydrodipicolinate synthase (300 aa).

Threonine 56 contributes to the pyruvate binding site. Tyrosine 145 (proton donor/acceptor) is an active-site residue. The active-site Schiff-base intermediate with substrate is lysine 173. A pyruvate-binding site is contributed by valine 215.

The protein belongs to the DapA family. Homotetramer; dimer of dimers.

The protein resides in the cytoplasm. It carries out the reaction L-aspartate 4-semialdehyde + pyruvate = (2S,4S)-4-hydroxy-2,3,4,5-tetrahydrodipicolinate + H2O + H(+). It functions in the pathway amino-acid biosynthesis; L-lysine biosynthesis via DAP pathway; (S)-tetrahydrodipicolinate from L-aspartate: step 3/4. Functionally, catalyzes the condensation of (S)-aspartate-beta-semialdehyde [(S)-ASA] and pyruvate to 4-hydroxy-tetrahydrodipicolinate (HTPA). In Prochlorococcus marinus (strain AS9601), this protein is 4-hydroxy-tetrahydrodipicolinate synthase.